The primary structure comprises 958 residues: Protein translocase subunit SecA (958 aa).

Residues Gln87, 105 to 109 (GEGKT), and Asp524 contribute to the ATP site. The tract at residues 598 to 617 (RRIDNQLRGRSGRQGDPGRS) is disordered. Positions 939, 941, 950, and 951 each coordinate Zn(2+).

The protein belongs to the SecA family. Monomer and homodimer. Part of the essential Sec protein translocation apparatus which comprises SecA, SecYEG and auxiliary proteins SecDF-YajC and YidC. Zn(2+) serves as cofactor.

The protein resides in the cell inner membrane. Its subcellular location is the cytoplasm. The catalysed reaction is ATP + H2O + cellular proteinSide 1 = ADP + phosphate + cellular proteinSide 2.. Part of the Sec protein translocase complex. Interacts with the SecYEG preprotein conducting channel. Has a central role in coupling the hydrolysis of ATP to the transfer of proteins into and across the cell membrane, serving both as a receptor for the preprotein-SecB complex and as an ATP-driven molecular motor driving the stepwise translocation of polypeptide chains across the membrane. The sequence is that of Protein translocase subunit SecA from Methylobacterium sp. (strain 4-46).